The primary structure comprises 215 residues: Triosephosphate isomerase (215 aa).

His-82 functions as the Electrophile in the catalytic mechanism. Glu-153 acts as the Proton acceptor in catalysis.

The protein belongs to the triosephosphate isomerase family. In terms of assembly, homodimer.

The enzyme catalyses D-glyceraldehyde 3-phosphate = dihydroxyacetone phosphate. The protein operates within carbohydrate biosynthesis; gluconeogenesis. It participates in carbohydrate degradation; glycolysis; D-glyceraldehyde 3-phosphate from glycerone phosphate: step 1/1. This chain is Triosephosphate isomerase (Tpi), found in Heliothis virescens (Tobacco budworm moth).